The chain runs to 89 residues: Small ribosomal subunit protein uS15 (89 aa).

Positions 1 to 13 (MTISKERKEEVIS) are enriched in basic and acidic residues. Positions 1–24 (MTISKERKEEVISEHGAAAGDTGS) are disordered.

It belongs to the universal ribosomal protein uS15 family. As to quaternary structure, part of the 30S ribosomal subunit. Forms a bridge to the 50S subunit in the 70S ribosome, contacting the 23S rRNA.

Its function is as follows. One of the primary rRNA binding proteins, it binds directly to 16S rRNA where it helps nucleate assembly of the platform of the 30S subunit by binding and bridging several RNA helices of the 16S rRNA. Functionally, forms an intersubunit bridge (bridge B4) with the 23S rRNA of the 50S subunit in the ribosome. This Rhodopirellula baltica (strain DSM 10527 / NCIMB 13988 / SH1) protein is Small ribosomal subunit protein uS15.